We begin with the raw amino-acid sequence, 121 residues long: Large ribosomal subunit protein uL22 (121 aa).

This sequence belongs to the universal ribosomal protein uL22 family. In terms of assembly, part of the 50S ribosomal subunit.

Its function is as follows. This protein binds specifically to 23S rRNA; its binding is stimulated by other ribosomal proteins, e.g. L4, L17, and L20. It is important during the early stages of 50S assembly. It makes multiple contacts with different domains of the 23S rRNA in the assembled 50S subunit and ribosome. The globular domain of the protein is located near the polypeptide exit tunnel on the outside of the subunit, while an extended beta-hairpin is found that lines the wall of the exit tunnel in the center of the 70S ribosome. The protein is Large ribosomal subunit protein uL22 of Beutenbergia cavernae (strain ATCC BAA-8 / DSM 12333 / CCUG 43141 / JCM 11478 / NBRC 16432 / NCIMB 13614 / HKI 0122).